A 103-amino-acid chain; its full sequence is Small ribosomal subunit protein uS10 (103 aa).

It belongs to the universal ribosomal protein uS10 family. In terms of assembly, part of the 30S ribosomal subunit.

Functionally, involved in the binding of tRNA to the ribosomes. This chain is Small ribosomal subunit protein uS10, found in Pseudomonas aeruginosa (strain LESB58).